Consider the following 700-residue polypeptide: uncharacterized protein (700 aa).

Cys-307, Cys-310, Cys-314, and Cys-558 together coordinate [4Fe-4S] cluster.

This sequence belongs to the AOR/FOR family. The cofactor is [4Fe-4S] cluster. It depends on Mo-molybdopterin as a cofactor. Requires tungstopterin as cofactor.

This is an uncharacterized protein from Escherichia coli (strain K12).